The following is a 539-amino-acid chain: Lysosomal cobalamin transport escort protein LMBD1 (539 aa).

Residues 1–7 (MAAAASE) lie on the Extracellular side of the membrane. The chain crosses the membrane as a helical span at residues 8 to 28 (LLTGWFLFGLALLAILIFSWV). Residues 29-47 (YVRKYQSRRESEVISTVTA) lie on the Cytoplasmic side of the membrane. Residues 48–68 (IFALAVALISSALLPVDIFLV) form a helical membrane-spanning segment. Over 69 to 97 (SYMKNQNGTFKDWADANVSRQIEDTVLYG) the chain is Extracellular. Asn-75 and Asn-85 each carry an N-linked (GlcNAc...) asparagine glycan. The chain crosses the membrane as a helical span at residues 98 to 118 (YYTLYSIILFCVFLWIPFVYF). Over 119–141 (YYEEKEEDDGNTCSQVKTALKYT) the chain is Cytoplasmic. A helical membrane pass occupies residues 142–162 (LGFITVCAVLLLIGAFVPLDI). Residues 163–185 (PNKKNSTEWEKVKLLFEEFGSSH) lie on the Extracellular side of the membrane. Asn-167 carries an N-linked (GlcNAc...) asparagine glycan. Residues 186–206 (GLTALSFSISSLTVIGMLAAI) traverse the membrane as a helical segment. Residues 207 to 302 (TYTAYGMSAL…KFCEAIRPLK (96 aa)) are Cytoplasmic-facing. A helical transmembrane segment spans residues 303 to 323 (IVWGVFFIIVALLFTVSLFLS). The Extracellular portion of the chain corresponds to 324 to 361 (NLDKALHSAGFDSGFIILGTNLTNPLNMLLPVLQTVFP). A glycan (N-linked (GlcNAc...) asparagine) is linked at Asn-344. Residues 362–382 (LDYILITTIVMYFIFTSMAGI) traverse the membrane as a helical segment. At 383-405 (RNMGIWFFWIRLYKIRRGKTRPQ) the chain is on the cytoplasmic side. Residues 406–426 (ALLFLCMILLLIVLHTSYMIY) form a helical membrane-spanning segment. At 427–483 (SLAPQYVMYGSQKYLVQSNKTIDGQPKNVTTFVAKDCDADAPEDQCIVTRTYLFLHK) the chain is on the extracellular side. Residues Asn-445 and Asn-454 are each glycosylated (N-linked (GlcNAc...) asparagine). A helical transmembrane segment spans residues 484–504 (FWFFSAVYYFGNWAFIAVFLI). Residues 505–539 (GLIVSCCKGKKSVIEGEVDEDDSDMSDDELSAYYC) lie on the Cytoplasmic side of the membrane.

Belongs to the LIMR family. LMBRD1 subfamily.

The protein localises to the endoplasmic reticulum membrane. The protein resides in the lysosome membrane. It localises to the cell membrane. Its function is as follows. Lysosomal membrane chaperone required to export cobalamin (vitamin B12) from the lysosome to the cytosol, allowing its conversion to cofactors. Targets ABCD4 transporter from the endoplasmic reticulum to the lysosome. Then forms a complex with lysosomal ABCD4 and cytoplasmic MMACHC to transport cobalamin across the lysosomal membrane. May play a role in mediating and regulating the internalization of the insulin receptor. The sequence is that of Lysosomal cobalamin transport escort protein LMBD1 (LMBRD1) from Gallus gallus (Chicken).